The sequence spans 522 residues: Protein nucleotidyltransferase YdiU (522 aa).

Residues Gly-109, Gly-111, Arg-112, Lys-132, Asp-144, Gly-145, Arg-195, and Arg-202 each coordinate ATP. Catalysis depends on Asp-271, which acts as the Proton acceptor. Mg(2+)-binding residues include Asn-272 and Asp-281. Asp-281 lines the ATP pocket.

Belongs to the SELO family. The cofactor is Mg(2+). Mn(2+) is required as a cofactor.

It catalyses the reaction L-seryl-[protein] + ATP = 3-O-(5'-adenylyl)-L-seryl-[protein] + diphosphate. It carries out the reaction L-threonyl-[protein] + ATP = 3-O-(5'-adenylyl)-L-threonyl-[protein] + diphosphate. The enzyme catalyses L-tyrosyl-[protein] + ATP = O-(5'-adenylyl)-L-tyrosyl-[protein] + diphosphate. The catalysed reaction is L-histidyl-[protein] + UTP = N(tele)-(5'-uridylyl)-L-histidyl-[protein] + diphosphate. It catalyses the reaction L-seryl-[protein] + UTP = O-(5'-uridylyl)-L-seryl-[protein] + diphosphate. It carries out the reaction L-tyrosyl-[protein] + UTP = O-(5'-uridylyl)-L-tyrosyl-[protein] + diphosphate. Nucleotidyltransferase involved in the post-translational modification of proteins. It can catalyze the addition of adenosine monophosphate (AMP) or uridine monophosphate (UMP) to a protein, resulting in modifications known as AMPylation and UMPylation. This chain is Protein nucleotidyltransferase YdiU, found in Burkholderia multivorans (strain ATCC 17616 / 249).